The primary structure comprises 153 residues: Interleukin-2 (153 aa).

Residues 1 to 20 (MYRMQLLSCIALSLALVTNS) form the signal peptide. An O-linked (GalNAc...) threonine glycan is attached at T23. C78 and C125 form a disulfide bridge.

The protein belongs to the IL-2 family.

It is found in the secreted. Cytokine produced by activated CD4-positive helper T-cells and to a lesser extend activated CD8-positive T-cells and natural killer (NK) cells that plays pivotal roles in the immune response and tolerance. Binds to a receptor complex composed of either the high-affinity trimeric IL-2R (IL2RA/CD25, IL2RB/CD122 and IL2RG/CD132) or the low-affinity dimeric IL-2R (IL2RB and IL2RG). Interaction with the receptor leads to oligomerization and conformation changes in the IL-2R subunits resulting in downstream signaling starting with phosphorylation of JAK1 and JAK3. In turn, JAK1 and JAK3 phosphorylate the receptor to form a docking site leading to the phosphorylation of several substrates including STAT5. This process leads to activation of several pathways including STAT, phosphoinositide-3-kinase/PI3K and mitogen-activated protein kinase/MAPK pathways. Functions as a T-cell growth factor and can increase NK-cell cytolytic activity as well. Promotes strong proliferation of activated B-cells and subsequently immunoglobulin production. Plays a pivotal role in regulating the adaptive immune system by controlling the survival and proliferation of regulatory T-cells, which are required for the maintenance of immune tolerance. Moreover, participates in the differentiation and homeostasis of effector T-cell subsets, including Th1, Th2, Th17 as well as memory CD8-positive T-cells. The sequence is that of Interleukin-2 (IL2) from Homo sapiens (Human).